Reading from the N-terminus, the 602-residue chain is DNA mismatch repair protein MutL (602 aa).

The segment at 337 to 367 (KRPFPGSSTNYSGIQQDTKKQESDNPEKARG) is disordered. A compositionally biased stretch (polar residues) spans 342–352 (GSSTNYSGIQQ). The span at 353 to 367 (DTKKQESDNPEKARG) shows a compositional bias: basic and acidic residues.

Belongs to the DNA mismatch repair MutL/HexB family.

Its function is as follows. This protein is involved in the repair of mismatches in DNA. It is required for dam-dependent methyl-directed DNA mismatch repair. May act as a 'molecular matchmaker', a protein that promotes the formation of a stable complex between two or more DNA-binding proteins in an ATP-dependent manner without itself being part of a final effector complex. The polypeptide is DNA mismatch repair protein MutL (Kosmotoga olearia (strain ATCC BAA-1733 / DSM 21960 / TBF 19.5.1)).